The primary structure comprises 1491 residues: MKHLKGLLLPALLALASSAAAKDPLVETTPFKNELVNLMYFDDSGVALVQELDNGKIFRSHDAGKGWKEIKDVQGLGIIKSPYDNKVALILGEKKHWITYDQGENWDSFETKLPPSPQGPVGWHAQDNKKILLNEIENCFTAPCLGKTYYTTDGFKTDPKTLVDDRRMCQWAKASERFLQGVDKHDDRILCITRGKYSDRSKDFRLLMSDNFFKETEEPVMSSGRTVQGMANMAAVKGYIVAAAKAEHSSELALYVTQDTDSWHHARFGDHKIEEDAYTILESTNYSIQVDVMTSKYVTMGNLYTSNSNGTYFTKNVEHTNRNDAGYVDFEKIANIQGVVLVNTVDNYKEVEKSGQSKKLKSRISFDDGRSFEKLTVKGKDGELHLHSVTNLHNSGRVFSSPAPGIVMGVGNTGDYLGKYTDGDLYVSDDAGLTWELALEEAHKYEFGDQGSVLVAVFDEGDTDEIRYSFKHGRKDTWQKIKLDYKIRARELTTLPDSTSLKFMIYGSRKKDGGGREHVIVHLDFSDMLKKCGDSDFDDEWSVRKDADGDPSCVMGHKQLFRRRKWDAECSVGELFKDPVPKFKPCDCDKFRDYECDFNFTPTGEGKDKKCEPSESFSLPKGACEGDAKSYKGSSGWRKIPGNQCKGETERDKQVERECKDAERPRPKTDKITSEITKFKGSNFMEQYYLERNTQSDGTDNDRGKDETVVMLTDERTAYITHDHGKKWKKAVDDEIVRIYPHQYENNNVYFLTASKKVYYSKDRGLHDSINSFEAPVMPNTEMLPIMQFHPKQKDWIIWLGGKNCEKLGNKDCHTVAYVSQKNGEDSSWESLVPYVKKCAFVWREAGRSVKEEQVFCEQHTNEEKNAPLELISSDDWFKKKDVKFKSVVEFATMSEFIIVATKAEDNTLHLDASLDAHTFAEAKFPPKFFDIHQTAYTVLDSSTHAVFLHVTVNPQRDQEYGSIIKSNSNGTSYVMSLAAVNRNTEGYVDFEKMQGLEGVAVANVIVNVDEVNKGAKKKKQSRITHNDGADWEPLQAPEKDSDDKPYDCDIADKKKCGLHIHGYTERADPREMYSSPTAVGLMLAVGNVGPELTTFGEANTFMTTDAGITWKEVKKGTYAWEFGDQGSVIVIVRRGEDTDHVYYSVDSGAKWDLYQFADHKMRVDAITTVPSDTSLNFLLWGKDSRELFAVNLDFSGLPEFQKECKLDENDPTKGDYDLWSPQHPLQQDEPECLFGHVAQYHRKKRDVKCRNGQRIDQMHDIARNCSCTRRDFECAYNYERDSSGDCVLVPGLSLPDPAKVCSNKNVKEYYSNTRFRKIPLSTCQGGTEYDKTGDVHPCPGFEEDFKKNHGVGGFTLFLAIVLPFAAAAGVGYWVWRNWDGKFGRIRLGEPGGGSAFDSDAPWVRWPIAAVSGLVAVGAALPLVVGSVWRWVVGRMGGRGGGGGGYSGLGGSGFGRAYTSRSSFARGRGEYSVVDPDEGELLGDEESDEDV.

An N-terminal signal peptide occupies residues 1–21 (MKHLKGLLLPALLALASSAAA). The Lumenal portion of the chain corresponds to 22-1354 (KDPLVETTPF…DFKKNHGVGG (1333 aa)). The stretch at 97–107 (WITYDQGENWD) is one BNR 1 repeat. Asparagine 285 and asparagine 309 each carry an N-linked (GlcNAc...) asparagine glycan. 2 BNR repeats span residues 364–374 (ISFDDGRSFEK) and 426–436 (YVSDDAGLTWE). The segment at 640–667 (IPGNQCKGETERDKQVERECKDAERPRP) is disordered. Positions 647-667 (GETERDKQVERECKDAERPRP) are enriched in basic and acidic residues. Residues 719 to 730 (YITHDHGKKWKK) form a BNR 4 repeat. An N-linked (GlcNAc...) asparagine glycan is attached at asparagine 970. The interval 1018-1047 (KKKQSRITHNDGADWEPLQAPEKDSDDKPY) is disordered. Basic and acidic residues predominate over residues 1038–1047 (PEKDSDDKPY). BNR repeat units lie at residues 1102–1112 (FMTTDAGITWK) and 1143–1153 (YYSVDSGAKWD). Asparagine 1265 carries an N-linked (GlcNAc...) asparagine glycan. A helical membrane pass occupies residues 1355–1375 (FTLFLAIVLPFAAAAGVGYWV). The Cytoplasmic segment spans residues 1376–1405 (WRNWDGKFGRIRLGEPGGGSAFDSDAPWVR). The chain crosses the membrane as a helical span at residues 1406 to 1426 (WPIAAVSGLVAVGAALPLVVG). Residues 1427-1491 (SVWRWVVGRM…LGDEESDEDV (65 aa)) lie on the Lumenal side of the membrane. The disordered stretch occupies residues 1464 to 1491 (FARGRGEYSVVDPDEGELLGDEESDEDV). A compositionally biased stretch (acidic residues) spans 1475-1491 (DPDEGELLGDEESDEDV).

It belongs to the VPS10-related sortilin family.

The protein resides in the golgi apparatus. It is found in the trans-Golgi network membrane. It localises to the prevacuolar compartment membrane. Functionally, functions as a sorting receptor in the Golgi compartment required for the intracellular sorting and delivery of soluble vacuolar proteins, like carboxypeptidase Y (CPY) and proteinase A. Executes multiple rounds of sorting by cycling between the late Golgi and a prevacuolar endosome-like compartment. This is Vacuolar protein sorting/targeting protein 10 (vps10) from Pyrenophora tritici-repentis (strain Pt-1C-BFP) (Wheat tan spot fungus).